A 317-amino-acid polypeptide reads, in one-letter code: MSQEYLDFELPIAELEAKIESLRAVSGDDNEINLDDEIKRLQKKSEELTKKTFANLDAWQISRMARHPNRPYTLDYIQHIFTEFEELAGDRAFADDKAIVGGLARLDGRPVMVIGHQKGRTTKEKVLRNFGMPAPEGYRKALRLMEMAERFKLPIITFIDTPGAYPGVGAEERGQAEAIARNLREMSTLSVPVICTVIGEGGSGGALAIGVGDKVNMLQYSTYSVISPEGCASILWKSAEKASTAAEVMGLTAERLKELDLIDNIVTEPLGGAHRNYAETAQNLKARLLTDLEDLDVLDKDDLLDRRYQRLMSYGYC.

In terms of domain architecture, CoA carboxyltransferase C-terminal spans 40 to 294 (RLQKKSEELT…KARLLTDLED (255 aa)).

It belongs to the AccA family. In terms of assembly, acetyl-CoA carboxylase is a heterohexamer composed of biotin carboxyl carrier protein (AccB), biotin carboxylase (AccC) and two subunits each of ACCase subunit alpha (AccA) and ACCase subunit beta (AccD).

The protein resides in the cytoplasm. It catalyses the reaction N(6)-carboxybiotinyl-L-lysyl-[protein] + acetyl-CoA = N(6)-biotinyl-L-lysyl-[protein] + malonyl-CoA. The protein operates within lipid metabolism; malonyl-CoA biosynthesis; malonyl-CoA from acetyl-CoA: step 1/1. Functionally, component of the acetyl coenzyme A carboxylase (ACC) complex. First, biotin carboxylase catalyzes the carboxylation of biotin on its carrier protein (BCCP) and then the CO(2) group is transferred by the carboxyltransferase to acetyl-CoA to form malonyl-CoA. The protein is Acetyl-coenzyme A carboxylase carboxyl transferase subunit alpha of Actinobacillus succinogenes (strain ATCC 55618 / DSM 22257 / CCUG 43843 / 130Z).